The chain runs to 473 residues: Rop guanine nucleotide exchange factor 3 (473 aa).

Residues 1–28 (MENLSNPDENDDHQSPRSIDQNDQSAVE) are disordered. Residues 16-28 (PRSIDQNDQSAVE) show a composition bias toward polar residues. The 379-residue stretch at 95–473 (LVVQEISEPE…YVDKTMRGSE (379 aa)) folds into the PRONE domain.

In terms of biological role, guanine-nucleotide exchange factor (GEF) that acts as an activator of Rop (Rho of plants) GTPases by promoting the exchange of GDP for GTP. The polypeptide is Rop guanine nucleotide exchange factor 3 (ROPGEF3) (Arabidopsis thaliana (Mouse-ear cress)).